Reading from the N-terminus, the 469-residue chain is E3 ubiquitin-protein ligase TRIM21 (469 aa).

An RING-type zinc finger spans residues 16 to 55; the sequence is CSICLDPMVEPMSIECGHSFCQECISEVGKEGGSVCPVCR. The B box-type zinc-finger motif lies at 87 to 128; sequence PHGELCVVHREKIHLFCEEDGKALCWVCSQSQKHRDHPMVPI. Zn(2+)-binding residues include cysteine 92, histidine 95, cysteine 114, and histidine 120. Positions 128–245 form a coiled coil; it reads IEEAAQEYQE…RRGSALELLQ (118 aa). Phosphoserine is present on serine 266. Positions 268-467 constitute a B30.2/SPRY domain; sequence DLRNVFYVPG…APLILCPLKT (200 aa).

Belongs to the TRIM/RBCC family. As to quaternary structure, homotrimer. Interacts (via C-terminus) with IRF8 (via C-terminus). Component of a SCF(SKP2)-like complex containing CUL1, SKP1, TRIM21 and SKP2. Interacts with CALR, CUL1, FBXW11, HSPA5, IKBKB, IRF3, SKP1 and VCP. Interacts with SKP2; the interaction with SKP2 does not depend on an intact F-box domain. Interacts (via N-terminus and C-terminus) with DCP2 (via N-terminus and C-terminus). Interacts with ULK1, BECN1 and with ATG8 family members, including GABARAP, GABARAPL1, GABARAPL2 and MAP1LC3C/LC3C. Interacts with TRIM21 and SQSTM1/sequestosome 1. Interacts with IRF3. Interacts (via the SPRY domain) with NMI (via coiled-coil domain); the interaction promotes 'Lys-63'-linked ubiquitination of NMI. Interacts with IFI35 and NMI; the interaction facilitates NMI-IFI35 complex formation. In terms of processing, autoubiquitinated; does not lead to its proteasomal degradation. Deubiquitinated by USP4; leading to its stabilization.

It is found in the cytoplasm. The protein localises to the cytoplasmic vesicle. It localises to the autophagosome. Its subcellular location is the nucleus. The protein resides in the P-body. It is found in the stress granule. It carries out the reaction S-ubiquitinyl-[E2 ubiquitin-conjugating enzyme]-L-cysteine + [acceptor protein]-L-lysine = [E2 ubiquitin-conjugating enzyme]-L-cysteine + N(6)-ubiquitinyl-[acceptor protein]-L-lysine.. It functions in the pathway protein modification; protein ubiquitination. Its function is as follows. E3 ubiquitin-protein ligase whose activity is dependent on E2 enzymes, UBE2D1, UBE2D2, UBE2E1 and UBE2E2. Forms a ubiquitin ligase complex in cooperation with the E2 UBE2D2 that is used not only for the ubiquitination of USP4 and IKBKB but also for its self-ubiquitination. Component of cullin-RING-based SCF (SKP1-CUL1-F-box protein) E3 ubiquitin-protein ligase complexes such as SCF(SKP2)-like complexes. A TRIM21-containing SCF(SKP2)-like complex is shown to mediate ubiquitination of CDKN1B ('Thr-187' phosphorylated-form), thereby promoting its degradation by the proteasome. Monoubiquitinates IKBKB that will negatively regulates Tax-induced NF-kappa-B signaling. Negatively regulates IFN-beta production post-pathogen recognition by catalyzing polyubiquitin-mediated degradation of IRF3. Mediates the ubiquitin-mediated proteasomal degradation of IgG1 heavy chain, which is linked to the VCP-mediated ER-associated degradation (ERAD) pathway. Promotes IRF8 ubiquitination, which enhanced the ability of IRF8 to stimulate cytokine genes transcription in macrophages. Plays a role in the regulation of the cell cycle progression. Enhances the decapping activity of DCP2. Exists as a ribonucleoprotein particle present in all mammalian cells studied and composed of a single polypeptide and one of four small RNA molecules. At least two isoforms are present in nucleated and red blood cells, and tissue specific differences in RO/SSA proteins have been identified. The common feature of these proteins is their ability to bind HY RNAs.2. Involved in the regulation of innate immunity and the inflammatory response in response to IFNG/IFN-gamma. Organizes autophagic machinery by serving as a platform for the assembly of ULK1, Beclin 1/BECN1 and ATG8 family members and recognizes specific autophagy targets, thus coordinating target recognition with assembly of the autophagic apparatus and initiation of autophagy. Also regulates autophagy through FIP200/RB1CC1 ubiquitination and subsequent decreased protein stability. Represses the innate antiviral response by facilitating the formation of the NMI-IFI35 complex through 'Lys-63'-linked ubiquitination of NMI. During viral infection, promotes cell pyroptosis by mediating 'Lys-6'-linked ubiquitination of ISG12a/IFI27, facilitating its translocation into the mitochondria and subsequent CASP3 activation. When up-regulated through the IFN/JAK/STAT signaling pathway, promotes 'Lys-27'-linked ubiquitination of MAVS, leading to the recruitment of TBK1 and up-regulation of innate immunity. Mediates 'Lys-63'-linked polyubiquitination of G3BP1 in response to heat shock, leading to stress granule disassembly. The polypeptide is E3 ubiquitin-protein ligase TRIM21 (TRIM21) (Bos taurus (Bovine)).